A 224-amino-acid chain; its full sequence is MKKRAIVLLSGGLDSATVLAMANADGFETYALSMRYGQRHSSELEAAKKVAAALGAVRHEIVDLDLRKFGGSALTDDALDVPTDGVQSGIPITYVPARNTIMLSLALGWAEAVGARDLFFGANAVDYSGYPDCRPEYVAAYETLANLATKAGVEGERIRVNAPIINMTKAEIIQAGVRLGVDYGLTVSCYKADDAGRACGVCDSCRIRKAGFEAAGVPDPTRYV.

Position 9-19 (9-19 (LSGGLDSATVL)) interacts with ATP. Residues Cys-189, Cys-199, Cys-202, and Cys-205 each coordinate Zn(2+).

The protein belongs to the QueC family. Zn(2+) serves as cofactor.

It catalyses the reaction 7-carboxy-7-deazaguanine + NH4(+) + ATP = 7-cyano-7-deazaguanine + ADP + phosphate + H2O + H(+). The protein operates within purine metabolism; 7-cyano-7-deazaguanine biosynthesis. Functionally, catalyzes the ATP-dependent conversion of 7-carboxy-7-deazaguanine (CDG) to 7-cyano-7-deazaguanine (preQ(0)). The chain is 7-cyano-7-deazaguanine synthase from Ralstonia pickettii (strain 12J).